Consider the following 460-residue polypeptide: NADH-quinone oxidoreductase subunit N (460 aa).

Transmembrane regions (helical) follow at residues 2 to 22, 28 to 48, 65 to 85, 104 to 124, 155 to 175, 196 to 216, 230 to 250, 263 to 283, 292 to 312, 321 to 341, 363 to 383, 400 to 420, and 438 to 458; these read LLPE…AVML, IVAN…LKYS, ANIA…MIIY, ILLS…LLLF, FILG…IYGF, LGLV…LSSA, PIAS…AILL, ISYN…ALGA, LMAY…LLRT, LYML…IMLL, IAAA…LAGF, LLAY…LKII, and YGLL…SFII.

This sequence belongs to the complex I subunit 2 family. NDH-1 is composed of 14 different subunits. Subunits NuoA, H, J, K, L, M, N constitute the membrane sector of the complex.

The protein localises to the cell inner membrane. The catalysed reaction is a quinone + NADH + 5 H(+)(in) = a quinol + NAD(+) + 4 H(+)(out). Its function is as follows. NDH-1 shuttles electrons from NADH, via FMN and iron-sulfur (Fe-S) centers, to quinones in the respiratory chain. The immediate electron acceptor for the enzyme in this species is believed to be ubiquinone. Couples the redox reaction to proton translocation (for every two electrons transferred, four hydrogen ions are translocated across the cytoplasmic membrane), and thus conserves the redox energy in a proton gradient. This Rickettsia bellii (strain RML369-C) protein is NADH-quinone oxidoreductase subunit N.